Reading from the N-terminus, the 231-residue chain is 2-C-methyl-D-erythritol 4-phosphate cytidylyltransferase (231 aa).

Belongs to the IspD/TarI cytidylyltransferase family. IspD subfamily.

It carries out the reaction 2-C-methyl-D-erythritol 4-phosphate + CTP + H(+) = 4-CDP-2-C-methyl-D-erythritol + diphosphate. Its pathway is isoprenoid biosynthesis; isopentenyl diphosphate biosynthesis via DXP pathway; isopentenyl diphosphate from 1-deoxy-D-xylulose 5-phosphate: step 2/6. Catalyzes the formation of 4-diphosphocytidyl-2-C-methyl-D-erythritol from CTP and 2-C-methyl-D-erythritol 4-phosphate (MEP). The chain is 2-C-methyl-D-erythritol 4-phosphate cytidylyltransferase from Clostridium novyi (strain NT).